We begin with the raw amino-acid sequence, 891 residues long: uncharacterized protein (891 aa).

The first 20 residues, 1–20 (MKILKSLVLLVLFMAMPAKA), serve as a signal peptide directing secretion. The next 6 membrane-spanning stretches (helical) occupy residues 525 to 545 (VTIFGLMFVTGALKLTAVEVI), 568 to 588 (TYFFSAFTDGIDFFVTNVVGA), 614 to 634 (LLFIELLQIHNGLAFIAIITI), 652 to 672 (VIAFIGVTVMISLAPFFIILM), 685 to 705 (ISTLLSYVVQPTILLIFFLLI), and 776 to 796 (FLVLFTTALLFYSYCLMSYSL).

It belongs to the TrbL/VirB6 family.

The protein resides in the cell membrane. This is an uncharacterized protein from Rickettsia conorii (strain ATCC VR-613 / Malish 7).